The primary structure comprises 1105 residues: Ran-binding protein 6 (1105 aa).

An N-acetylalanine modification is found at Ala2. HEAT repeat units follow at residues 219 to 257, 361 to 399, 402 to 440, and 444 to 483; these read FKDFADLLPGILQAVNDSCYQDDDSVLESLVEIADTVPK, KVVLPMTKEHIMQMLQSPDWKYRHAGLMALSAIGEGCHQ, ESILDETVNSVLLFLQDPHPRVRAAACTTLGQMATDFAP, and KKFHETVIAALLRTMENQGNQRVQSHAASALIIFIEDCPK. Positions 333-383 are ran-GTP binding; that stretch reads DEMEEDDFDSNAVAAESALDRLACGLGGKVVLPMTKEHIMQMLQSPDWKYR. Positions 806–842 form a coiled coil; the sequence is KAKLEGHFKNQELRQVKRQEENYDQQVEMSLQDEDEC. HEAT repeat units follow at residues 866–905, 908–946, and 949–987; these read LPWFEQLLPLIVNLICSSRPWPDRQWGLCIFDDIIEHCSP, FKYVEYFRWPMLLNMRDNNPEVRQAAAYGLGVMAQFGGD, and RSLCSEAVPLLVKVIKCANSKTKKNVIATENCISAIGKI.

The protein belongs to the importin beta family.

It is found in the cytoplasm. Its subcellular location is the nucleus. Functionally, may function in nuclear protein import as nuclear transport receptor. The chain is Ran-binding protein 6 (RANBP6) from Homo sapiens (Human).